A 1790-amino-acid chain; its full sequence is Atrochrysone carboxylic acid synthase (1790 aa).

The segment at 27 to 265 (RDLQDLFRQA…ALPVYGGLCH (239 aa)) is N-terminal acylcarrier protein transacylase domain (SAT). The Ketosynthase family 3 (KS3) domain maps to 399–833 (QSKLAIVGMS…GGNTTMILED (435 aa)). Active-site for beta-ketoacyl synthase activity residues include Cys572, His708, and His751. The tract at residues 934–1254 (FSFTGQGASH…IAQLYTVGVD (321 aa)) is malonyl-CoA:ACP transacylase (MAT) domain. Residues 1323–1475 (QQIVEQVFDT…SLTHLVRDRI (153 aa)) are N-terminal hotdog fold. In terms of domain architecture, PKS/mFAS DH spans 1323–1634 (QQIVEQVFDT…FHRYRRILLE (312 aa)). His1357 acts as the Proton acceptor; for dehydratase activity in catalysis. Residues 1357 to 1631 (HRMNDCGVAT…GIEFHRYRRI (275 aa)) form a product template (PT) domain region. A C-terminal hotdog fold region spans residues 1487–1634 (ANRLSHNMAY…FHRYRRILLE (148 aa)). The active-site Proton donor; for dehydratase activity is Asp1545. A disordered region spans residues 1644 to 1667 (NLDDTTETKDISSSTQHSVPVSRQ). The segment covering 1654–1664 (ISSSTQHSVPV) has biased composition (polar residues). Positions 1715–1789 (SSITNRAMQL…DLRNWLEETY (75 aa)) constitute a Carrier domain. Ser1749 carries the post-translational modification O-(pantetheine 4'-phosphoryl)serine.

The enzyme catalyses holo-[ACP] + 8 malonyl-CoA + 8 H(+) = atrochrysone carboxyl-[ACP] + 8 CO2 + 8 CoA + 2 H2O. The protein operates within pigment biosynthesis. Its function is as follows. Non-reducing polyketide synthase; part of the gene cluster that mediates the biosynthesis of the bianthraquinone cladofulvin, a conidial pigment not required for virulence but that plays a role in fitness and resistance to environmental stresses including UV light and low-temperature stress. The pathway begins with the synthesis of atrochrysone thioester by the polyketide synthase (PKS) claG. The atrochrysone carboxyl ACP thioesterase claF then breaks the thioester bond and releases the atrochrysone carboxylic acid from claG. This compound is decarboxylated by claH to yield emodin, which is further converted to chrysophanol hydroquinone by the reductase claC and the dehydratase claB. The cytochrome P450 monooxygenase claM then catalyzes the dimerization of nataloe-emodin to cladofulvin. This is Atrochrysone carboxylic acid synthase from Passalora fulva (Tomato leaf mold).